Reading from the N-terminus, the 172-residue chain is MSVKMKKCSREDLQTLQQLSIETFNDTFKEQNSPENMKAYLESAFNTEQLEKELSNMSSQFFFIYFDHEIAGYVKVNIDDAQSEEMGAESLEIERIYIKNSFQKHGLGKHLLNKAIEIALERNKKNIWLGVWEKNENAIAFYKKMGFVQTGAHSFYMGDEEQTDLIMAKTLI.

The region spanning 3 to 172 (VKMKKCSRED…TDLIMAKTLI (170 aa)) is the N-acetyltransferase domain. Residues 96–98 (IYI), 105–109 (HGLGK), and 135–137 (NEN) each bind acetyl-CoA. Tyr-142 (proton donor) is an active-site residue. Lys-144 is a binding site for acetyl-CoA.

It belongs to the acetyltransferase family. As to quaternary structure, monomer.

The catalysed reaction is an alkane-alpha,omega-diamine + acetyl-CoA = an N-acetylalkane-alpha,omega-diamine + CoA + H(+). In terms of biological role, involved in the protection against polyamine toxicity by regulating their concentration. Could also be involved in the negative control of sporulation as well as production of degradative enzymes such as alpha-amylase, levansucrase and alkaline phosphatase. Catalyzes the transfer of an acetyl group from acetyl coenzyme A (AcCoA) to an acceptor substrate and releases both CoA and the acetylated product. It possesses N1-acetyltransferase activity toward polyamine substrates including spermidine, spermine, aminopropylcadaverine, norspermidine, homospermidine, N(8)-acetylspermidine, diaminopropane and agmatine. The polypeptide is Spermidine/spermine N(1)-acetyltransferase (Bacillus subtilis (strain 168)).